An 812-amino-acid chain; its full sequence is Lon protease (812 aa).

Residues 22–215 (YAVLPLRDIV…KALSFMEAEI (194 aa)) enclose the Lon N-terminal domain. 367–374 (GPPGVGKT) provides a ligand contact to ATP. The Lon proteolytic domain maps to 602–783 (EDQVGVVTGL…GEVLKHALVR (182 aa)). Catalysis depends on residues S689 and K732. The segment at 787–812 (PIEWTEQENPTAVPPVEDEAGASLAH) is disordered.

This sequence belongs to the peptidase S16 family. In terms of assembly, homohexamer. Organized in a ring with a central cavity.

It is found in the cytoplasm. The catalysed reaction is Hydrolysis of proteins in presence of ATP.. Functionally, ATP-dependent serine protease that mediates the selective degradation of mutant and abnormal proteins as well as certain short-lived regulatory proteins. Required for cellular homeostasis and for survival from DNA damage and developmental changes induced by stress. Degrades polypeptides processively to yield small peptide fragments that are 5 to 10 amino acids long. Binds to DNA in a double-stranded, site-specific manner. Required for wild-type virulence during the initial stages of infection in the mouse model, but not essential for the establishment and maintenance of chronic infection in this host. This chain is Lon protease, found in Brucella abortus (strain 2308).